A 226-amino-acid chain; its full sequence is 7-cyano-7-deazaguanine synthase (226 aa).

ATP is bound at residue 10-20; it reads LSGGLDSATAA. 4 residues coordinate Zn(2+): Cys191, Cys199, Cys202, and Cys205.

It belongs to the QueC family. The cofactor is Zn(2+).

It catalyses the reaction 7-carboxy-7-deazaguanine + NH4(+) + ATP = 7-cyano-7-deazaguanine + ADP + phosphate + H2O + H(+). Its pathway is purine metabolism; 7-cyano-7-deazaguanine biosynthesis. Its function is as follows. Catalyzes the ATP-dependent conversion of 7-carboxy-7-deazaguanine (CDG) to 7-cyano-7-deazaguanine (preQ(0)). This is 7-cyano-7-deazaguanine synthase from Synechococcus sp. (strain CC9605).